The sequence spans 64 residues: MPKMKSNKSVAARFKLTGSGQLKRTRPGKRHKLSKKSSQEKRNLSKQPLVDKGQVGMYKRMMLV.

The segment at 1–56 is disordered; sequence MPKMKSNKSVAARFKLTGSGQLKRTRPGKRHKLSKKSSQEKRNLSKQPLVDKGQVG. Residues 23–35 are compositionally biased toward basic residues; sequence KRTRPGKRHKLSK.

It belongs to the bacterial ribosomal protein bL35 family.

In Chlamydia abortus (strain DSM 27085 / S26/3) (Chlamydophila abortus), this protein is Large ribosomal subunit protein bL35.